The sequence spans 31 residues: U1-theraphotoxin-Cv1a (31 aa).

Disulfide bonds link Cys2–Cys16, Cys9–Cys21, and Cys15–Cys28.

Expressed by the venom gland.

Its subcellular location is the secreted. Functionally, insecticidal toxin that induces reversible paralysis in crickets but not in cockroaches and mice. Molecular target unknown. This Coremiocnemis valida (Singapore tarantula) protein is U1-theraphotoxin-Cv1a.